The primary structure comprises 478 residues: Ribulose bisphosphate carboxylase large chain (478 aa).

A propeptide spanning residues Met1–Ser2 is cleaved from the precursor. At Pro3 the chain carries N-acetylproline. Position 14 is an N6,N6,N6-trimethyllysine (Lys14). Substrate is bound by residues Asn123 and Thr173. Catalysis depends on Lys175, which acts as the Proton acceptor. A substrate-binding site is contributed by Lys177. Mg(2+)-binding residues include Lys201, Asp203, and Glu204. Position 201 is an N6-carboxylysine (Lys201). The active-site Proton acceptor is His294. 3 residues coordinate substrate: Arg295, His327, and Ser379.

This sequence belongs to the RuBisCO large chain family. Type I subfamily. Heterohexadecamer of 8 large chains and 8 small chains; disulfide-linked. The disulfide link is formed within the large subunit homodimers. It depends on Mg(2+) as a cofactor. Post-translationally, the disulfide bond which can form in the large chain dimeric partners within the hexadecamer appears to be associated with oxidative stress and protein turnover.

The protein localises to the plastid. The protein resides in the chloroplast. The enzyme catalyses 2 (2R)-3-phosphoglycerate + 2 H(+) = D-ribulose 1,5-bisphosphate + CO2 + H2O. The catalysed reaction is D-ribulose 1,5-bisphosphate + O2 = 2-phosphoglycolate + (2R)-3-phosphoglycerate + 2 H(+). Functionally, ruBisCO catalyzes two reactions: the carboxylation of D-ribulose 1,5-bisphosphate, the primary event in carbon dioxide fixation, as well as the oxidative fragmentation of the pentose substrate in the photorespiration process. Both reactions occur simultaneously and in competition at the same active site. The protein is Ribulose bisphosphate carboxylase large chain of Neurachne munroi.